Reading from the N-terminus, the 302-residue chain is Recombination-associated protein RdgC (302 aa).

The protein belongs to the RdgC family.

It is found in the cytoplasm. The protein localises to the nucleoid. In terms of biological role, may be involved in recombination. This chain is Recombination-associated protein RdgC, found in Actinobacillus pleuropneumoniae serotype 7 (strain AP76).